A 215-amino-acid chain; its full sequence is Adenylate kinase (215 aa).

10-15 (GCGKGT) contributes to the ATP binding site. Residues 30 to 59 (STGDIFRQTIDQKGPYWEELKSYISKGLLV) are NMP. AMP is bound by residues T31, R36, 57-59 (LLV), and Q91. Residues 120-157 (GRRICSKCKRIYNIHYSAPKKEDICDDDGEFLIQRKDD) form an LID region. ATP is bound at residue R121. Residues C124 and C127 each coordinate Zn(2+). ATP is bound at residue 130–131 (IY). Residues C144 and D147 each coordinate Zn(2+). Positions 154 and 165 each coordinate AMP.

This sequence belongs to the adenylate kinase family. In terms of assembly, monomer.

The protein resides in the cytoplasm. The enzyme catalyses AMP + ATP = 2 ADP. It functions in the pathway purine metabolism; AMP biosynthesis via salvage pathway; AMP from ADP: step 1/1. Its function is as follows. Catalyzes the reversible transfer of the terminal phosphate group between ATP and AMP. Plays an important role in cellular energy homeostasis and in adenine nucleotide metabolism. This Malacoplasma penetrans (strain HF-2) (Mycoplasma penetrans) protein is Adenylate kinase.